The chain runs to 395 residues: Zinc finger protein HD1 (395 aa).

The segment at 30–72 (PWARPCDGCRAAPSVVYCRADAAYLCASCDARVHAANRVASRH) adopts a B box-type 1; atypical zinc-finger fold. Residues C35, C38, C58, H63, C78, C81, C101, and H106 each contribute to the Zn(2+) site. Residues 73–117 (ERVRVCEACERAPAALACRADAAALCVACDVQVHSANPLPAITIP) form a B box-type 2; atypical zinc finger. Disordered regions lie at residues 147–176 (SKDS…SNNG) and 208–228 (GMHE…EFAE). The segment covering 152-175 (NNNNNNNNNDNDNNDNNNSNSSNN) has biased composition (low complexity). One can recognise a CCT domain in the interval 326-368 (REARVLRYREKKKARKFEKTIRYETRKAYAEARPRIKGRFAKR).

The protein belongs to the CONSTANS family. As to quaternary structure, interacts with HAL3 in the dark. In terms of processing, phosphorylated by OSK4 in the presence of HDR1.

It is found in the nucleus. In terms of biological role, probable transcription factor involved in the regulation of flower development. Required for the promotion of flowering under short day (SD) conditions and the suppression of flowering under long day (LD) conditions. Positively regulates the floral activator HEADING DATE 3a (HD3A) under SD and negatively under LD conditions. This is Zinc finger protein HD1 from Oryza sativa subsp. japonica (Rice).